The sequence spans 68 residues: U-poneritoxin(01)-Om4b (68 aa).

Residues 1-25 (MKPSGLTLAFLVVFMMAIMYNSVQA) form the signal peptide. Positions 26–39 (EALADADAEAFAEA) are excised as a propeptide.

It belongs to the formicidae venom precursor-01 superfamily. Homo- or heterodimer with PLP4 (AC A0A348G5W0); disulfide-linked. Post-translationally, truncated sequences of this peptide have also been found in the venom. It is possible they have been cleaved in the venom. Expressed by the venom gland.

Its subcellular location is the secreted. This homodimer composed of two cationic amphipathic alpha-helical peptides has antimicrobial activities against E.coli, S.aureus (MIC=3.1 uM), and S.cerevisiae (MIC=3.1 uM). It also shows histamine-releasing activity (66.4% at 10 uM) and a weak hemolytic activity (10.5% at 50 uM). This chain is U-poneritoxin(01)-Om4b, found in Odontomachus monticola (Trap-jaw ant).